Consider the following 250-residue polypeptide: Small ribosomal subunit protein uS3 (250 aa).

The KH type-2 domain occupies Val-39–Asp-107. A disordered region spans residues Val-214–Glu-250. Residues Gln-220–Glu-250 are compositionally biased toward basic and acidic residues.

The protein belongs to the universal ribosomal protein uS3 family. As to quaternary structure, part of the 30S ribosomal subunit. Forms a tight complex with proteins S10 and S14.

Binds the lower part of the 30S subunit head. Binds mRNA in the 70S ribosome, positioning it for translation. This Acinetobacter baylyi (strain ATCC 33305 / BD413 / ADP1) protein is Small ribosomal subunit protein uS3.